The sequence spans 603 residues: Penicillin-binding protein activator LpoA (603 aa).

The first 26 residues, 1–26 (MAMNHHQRRSVPRLLTPIALSIVLSA), serve as a signal peptide directing secretion. Cysteine 27 is lipidated: N-palmitoyl cysteine. A lipid anchor (S-diacylglycerol cysteine) is attached at cysteine 27.

This sequence belongs to the LpoA family. Interacts with PBP1a.

It is found in the cell outer membrane. Functionally, regulator of peptidoglycan synthesis that is essential for the function of penicillin-binding protein 1A (PBP1a). In Vibrio cholerae serotype O1 (strain ATCC 39541 / Classical Ogawa 395 / O395), this protein is Penicillin-binding protein activator LpoA.